A 420-amino-acid polypeptide reads, in one-letter code: Phosphoribosylamine--glycine ligase (420 aa).

The ATP-grasp domain occupies 108–314; the sequence is KQIMVKYGIP…FAQNIDDILH (207 aa). 134–195 is a binding site for ATP; sequence IEEQGAPIVV…EEFLAGEEFS (62 aa). Mg(2+)-binding residues include Glu-284 and Asn-286.

This sequence belongs to the GARS family. It depends on Mg(2+) as a cofactor. Mn(2+) serves as cofactor.

It catalyses the reaction 5-phospho-beta-D-ribosylamine + glycine + ATP = N(1)-(5-phospho-beta-D-ribosyl)glycinamide + ADP + phosphate + H(+). Its pathway is purine metabolism; IMP biosynthesis via de novo pathway; N(1)-(5-phospho-D-ribosyl)glycinamide from 5-phospho-alpha-D-ribose 1-diphosphate: step 2/2. This Streptococcus suis protein is Phosphoribosylamine--glycine ligase.